The sequence spans 184 residues: Photosystem I assembly protein Ycf4 (184 aa).

2 helical membrane-spanning segments follow: residues 22 to 42 and 64 to 84; these read LCWA…GFSS and IVMC…WCTI.

This sequence belongs to the Ycf4 family.

It localises to the plastid. The protein resides in the chloroplast thylakoid membrane. Functionally, seems to be required for the assembly of the photosystem I complex. The chain is Photosystem I assembly protein Ycf4 from Angiopteris evecta (Mule's foot fern).